The sequence spans 413 residues: Protein arginine N-methyltransferase 2 (413 aa).

Disordered stretches follow at residues 65–85 (DDEEPNGVQTNGEQGDEQKSV) and 148–178 (ELEDDDEEEEEGQEEQTGTEEVEVEGESAPQ). Positions 148–173 (ELEDDDEEEEEGQEEQTGTEEVEVEG) are enriched in acidic residues. Residues 192-413 (TGPDVTNSRY…YRLPLCKYMD (222 aa)) enclose the RMT2 domain. Residues Tyr201, Met230, 250–255 (HGMGIV), 271–273 (EAH), 298–299 (WQ), and Asp318 contribute to the S-adenosyl-L-methionine site.

This sequence belongs to the class I-like SAM-binding methyltransferase superfamily. RMT2 methyltransferase family. As to quaternary structure, monomer.

It is found in the cytoplasm. The protein resides in the nucleus. S-adenosyl-L-methionine-dependent protein-arginine N-methyltransferase that methylates the delta-nitrogen atom of arginine residues to form N5-methylarginine (type IV) in target proteins. Monomethylates ribosomal protein L12. This Aspergillus oryzae (strain ATCC 42149 / RIB 40) (Yellow koji mold) protein is Protein arginine N-methyltransferase 2.